The chain runs to 88 residues: Apolipoprotein C-I (88 aa).

An N-terminal signal peptide occupies residues 1-26 (MRLILSLPVLVVVLSMVLEGPAPAQA).

This sequence belongs to the apolipoprotein C1 family. Expressed in the liver.

It is found in the secreted. Inhibitor of lipoprotein binding to the low density lipoprotein (LDL) receptor, LDL receptor-related protein, and very low density lipoprotein (VLDL) receptor. Associates with high density lipoproteins (HDL) and the triacylglycerol-rich lipoproteins in the plasma and makes up about 10% of the protein of the VLDL and 2% of that of HDL. Appears to interfere directly with fatty acid uptake and is also the major plasma inhibitor of cholesteryl ester transfer protein (CETP). Binds free fatty acids and reduces their intracellular esterification. Modulates the interaction of APOE with beta-migrating VLDL and inhibits binding of beta-VLDL to the LDL receptor-related protein. This Canis lupus familiaris (Dog) protein is Apolipoprotein C-I (APOC1).